Reading from the N-terminus, the 300-residue chain is Cell adhesion molecule CEACAM19 (300 aa).

Positions 1–32 (MEIPMGTQGCFSKSLLLSASILVLWMLQGSQA) are cleaved as a signal peptide. The Extracellular segment spans residues 33–157 (ALYIQKIPEQ…PSTHLPTNAG (125 aa)). An N-linked (GlcNAc...) asparagine glycan is attached at Asn104. The helical transmembrane segment at 158–178 (ILAATIIGSLAAGALLISCIA) threads the bilayer. The Cytoplasmic segment spans residues 179-300 (YLLVTRNWRG…APYCQLVPTS (122 aa)). The disordered stretch occupies residues 259-291 (SINPARPLPTPPHLQAEPENHQYQQDLLNPDPA).

Belongs to the immunoglobulin superfamily. CEA family. In terms of tissue distribution, ubiquitous with highest expression in prostate, uterus, fetal brain, mammary gland, adrenal gland, skeletal muscle, small intestine, and kidney, and lower expression in lung, cerebellum, testis, liver, pancreas, bone marrow and ovary.

It is found in the membrane. The sequence is that of Cell adhesion molecule CEACAM19 from Homo sapiens (Human).